A 384-amino-acid chain; its full sequence is Glycerol 3-phosphate oxidase (384 aa).

The signal sequence occupies residues 1-17 (MQTIDVLIVGGGVIGTS). FAD is bound at residue isoleucine 14. Residue cysteine 18 is the site of N-palmitoyl cysteine attachment. Cysteine 18 carries S-diacylglycerol cysteine lipidation. Residues glutamate 33, 42-43 (TS), and 47-49 (SGV) each bind FAD. 2 residues coordinate sn-glycerol 3-phosphate: serine 47 and histidine 51. Histidine 51 functions as the Proton acceptor in the catalytic mechanism. Position 177 (valine 177) interacts with FAD. 2 residues coordinate sn-glycerol 3-phosphate: lysine 258 and arginine 320. Position 346 to 347 (346 to 347 (MK)) interacts with FAD. Sn-glycerol 3-phosphate is bound at residue serine 348. Threonine 352 contacts FAD.

Monomer. FAD serves as cofactor.

It is found in the cytoplasm. It localises to the cell membrane. The catalysed reaction is sn-glycerol 3-phosphate + O2 = dihydroxyacetone phosphate + H2O2. It participates in polyol metabolism; glycerol degradation via glycerol kinase pathway; glycerone phosphate from sn-glycerol 3-phosphate (aerobic route): step 1/1. Its function is as follows. Catalyzes the oxidation of glycerol 3-phosphate to dihydroxyacetone phosphate (DHAP), with a reduction of O2 to H2O2. The formation of hydrogen peroxide by this enzyme is crucial for cytotoxic effects on host cells. Does not show any dehydrogenase activity with NAD(+). This chain is Glycerol 3-phosphate oxidase, found in Mycoplasma genitalium (strain ATCC 33530 / DSM 19775 / NCTC 10195 / G37) (Mycoplasmoides genitalium).